Reading from the N-terminus, the 382-residue chain is Lipid-A-disaccharide synthase (382 aa).

This sequence belongs to the LpxB family.

It catalyses the reaction 2-N,3-O-bis[(3R)-3-hydroxytetradecanoyl]-alpha-D-glucosaminyl 1-phosphate + UDP-2-N,3-O-bis[(3R)-3-hydroxytetradecanoyl]-alpha-D-glucosamine = lipid A disaccharide (E. coli) + UDP + H(+). The catalysed reaction is a lipid X + a UDP-2-N,3-O-bis[(3R)-3-hydroxyacyl]-alpha-D-glucosamine = a lipid A disaccharide + UDP + H(+). It functions in the pathway glycolipid biosynthesis; lipid IV(A) biosynthesis; lipid IV(A) from (3R)-3-hydroxytetradecanoyl-[acyl-carrier-protein] and UDP-N-acetyl-alpha-D-glucosamine: step 5/6. Its function is as follows. Condensation of UDP-2,3-diacylglucosamine and 2,3-diacylglucosamine-1-phosphate to form lipid A disaccharide, a precursor of lipid A, a phosphorylated glycolipid that anchors the lipopolysaccharide to the outer membrane of the cell. In Shigella dysenteriae serotype 1 (strain Sd197), this protein is Lipid-A-disaccharide synthase.